A 473-amino-acid chain; its full sequence is 1-aminocyclopropane-1-carboxylate synthase (473 aa).

Substrate contacts are provided by residues 84–85 (DY), Y145, and D151. K273 bears the N6-(pyridoxal phosphate)lysine mark.

Belongs to the class-I pyridoxal-phosphate-dependent aminotransferase family. Homodimer. Pyridoxal 5'-phosphate is required as a cofactor.

It catalyses the reaction S-adenosyl-L-methionine = 1-aminocyclopropane-1-carboxylate + S-methyl-5'-thioadenosine + H(+). It carries out the reaction (2S)-2-amino-3-butenoate + H2O = 2-oxobutanoate + NH4(+). It functions in the pathway alkene biosynthesis; ethylene biosynthesis via S-adenosyl-L-methionine; ethylene from S-adenosyl-L-methionine: step 1/2. Inhibited by L-aminoethoxyvinylglycine (AVG). Inhibited by L-vinylglycine (L-VG). Inhibited by S-methylmethionine through a L-VG ketimine intermediate. Its function is as follows. Catalyzes the formation of 1-aminocyclopropane-1-carboxylate, a direct precursor of ethylene in higher plants. Also catalyzes the conversion of L-vinylglycine (L-VG) to alpha-ketobutyrate and ammonia. Can use S-methylmethionine as substrate. The sequence is that of 1-aminocyclopropane-1-carboxylate synthase from Malus domestica (Apple).